Here is a 35-residue protein sequence, read N- to C-terminus: 5'-methylthioadenosine/S-adenosylhomocysteine nucleosidase (35 aa).

Residue Glu12 is the Proton acceptor of the active site.

This sequence belongs to the PNP/UDP phosphorylase family. MtnN subfamily. In terms of assembly, homodimer.

It carries out the reaction S-adenosyl-L-homocysteine + H2O = S-(5-deoxy-D-ribos-5-yl)-L-homocysteine + adenine. The catalysed reaction is S-methyl-5'-thioadenosine + H2O = 5-(methylsulfanyl)-D-ribose + adenine. The enzyme catalyses 5'-deoxyadenosine + H2O = 5-deoxy-D-ribose + adenine. The protein operates within amino-acid biosynthesis; L-methionine biosynthesis via salvage pathway; S-methyl-5-thio-alpha-D-ribose 1-phosphate from S-methyl-5'-thioadenosine (hydrolase route): step 1/2. Catalyzes the irreversible cleavage of the glycosidic bond in both 5'-methylthioadenosine (MTA) and S-adenosylhomocysteine (SAH/AdoHcy) to adenine and the corresponding thioribose, 5'-methylthioribose and S-ribosylhomocysteine, respectively. Also cleaves 5'-deoxyadenosine, a toxic by-product of radical S-adenosylmethionine (SAM) enzymes, into 5-deoxyribose and adenine. Thus, is required for in vivo function of the radical SAM enzymes biotin synthase and lipoic acid synthase, that are inhibited by 5'-deoxyadenosine accumulation. The polypeptide is 5'-methylthioadenosine/S-adenosylhomocysteine nucleosidase (mtnN) (Klebsiella pneumoniae).